The chain runs to 278 residues: HTH-type transcriptional activator RhaS (278 aa).

The HTH araC/xylS-type domain occupies asparagine 174–glycine 272. 2 DNA-binding regions (H-T-H motif) span residues aspartate 191 to threonine 212 and valine 239 to phenylalanine 262.

Binds DNA as a dimer.

The protein localises to the cytoplasm. Activates expression of the rhaBAD and rhaT operons. The chain is HTH-type transcriptional activator RhaS from Shigella flexneri serotype 5b (strain 8401).